A 464-amino-acid chain; its full sequence is JmjC domain-containing protein 1 (464 aa).

The 168-residue stretch at 182–349 (LYAKDMHLFR…QMYTALKEQY (168 aa)) folds into the JmjC domain.

The chain is JmjC domain-containing protein 1 (jmj1) from Schizosaccharomyces pombe (strain 972 / ATCC 24843) (Fission yeast).